We begin with the raw amino-acid sequence, 263 residues long: MNQSQAPVGVFDSGVGGLSVLREIRQLLPNESLLYVADSGHVPYGEKSAEYIRERCVLITEHLLAQGAKALVLACNTATAAAAAELRERYPQLPIVGMEPAVKPAAAATRSGVVGVLATTGTLKSAKFAALLDRFASDVRVITQPCPGLVECIEAGALQAPATRELLQGYVEPLLAEGCDTLILGCTHYPFLKPLLHSLVPDSVSLIDTGAAVARQLQRLLGQHELLATQPAQATRYWSSGDIQRMQAVLPLLLGEQAQVHVF.

Substrate-binding positions include 12–13 and 44–45; these read DS and YG. C75 functions as the Proton donor/acceptor in the catalytic mechanism. Residue 76–77 coordinates substrate; that stretch reads NT. The active-site Proton donor/acceptor is the C186. 187-188 contacts substrate; the sequence is TH.

This sequence belongs to the aspartate/glutamate racemases family.

The enzyme catalyses L-glutamate = D-glutamate. It participates in cell wall biogenesis; peptidoglycan biosynthesis. Functionally, provides the (R)-glutamate required for cell wall biosynthesis. This Ectopseudomonas mendocina (strain ymp) (Pseudomonas mendocina) protein is Glutamate racemase.